We begin with the raw amino-acid sequence, 409 residues long: Arginine deiminase (409 aa).

C399 (amidino-cysteine intermediate) is an active-site residue.

The protein belongs to the arginine deiminase family.

It localises to the cytoplasm. It catalyses the reaction L-arginine + H2O = L-citrulline + NH4(+). Its pathway is amino-acid degradation; L-arginine degradation via ADI pathway; carbamoyl phosphate from L-arginine: step 1/2. The chain is Arginine deiminase from Borrelia garinii subsp. bavariensis (strain ATCC BAA-2496 / DSM 23469 / PBi) (Borreliella bavariensis).